Here is a 32-residue protein sequence, read N- to C-terminus: 24 kDa flagellin (32 aa).

This sequence belongs to the archaeal flagellin family. Post-translationally, glycosylated.

The protein resides in the archaeal flagellum. Its function is as follows. Flagellin is the subunit protein which polymerizes to form the filaments of archaeal flagella. This is 24 kDa flagellin from Methanospirillum hungatei.